The sequence spans 236 residues: 2,3,4,5-tetrahydropyridine-2,6-dicarboxylate N-acetyltransferase (236 aa).

It belongs to the transferase hexapeptide repeat family. DapH subfamily.

The catalysed reaction is (S)-2,3,4,5-tetrahydrodipicolinate + acetyl-CoA + H2O = L-2-acetamido-6-oxoheptanedioate + CoA. Its pathway is amino-acid biosynthesis; L-lysine biosynthesis via DAP pathway; LL-2,6-diaminopimelate from (S)-tetrahydrodipicolinate (acetylase route): step 1/3. Functionally, catalyzes the transfer of an acetyl group from acetyl-CoA to tetrahydrodipicolinate. The protein is 2,3,4,5-tetrahydropyridine-2,6-dicarboxylate N-acetyltransferase of Clostridium botulinum (strain Kyoto / Type A2).